The following is a 1669-amino-acid chain: Collagen alpha-1(IV) chain (1669 aa).

Residues M1–A27 form the signal peptide. The propeptide at K28–K172 is N-terminal propeptide (7S domain). Disordered regions lie at residues K48–E459, G504–Q1382, and P1404–P1431. A glycan (N-linked (GlcNAc...) asparagine) is linked at N126. Positions G173–P1440 are triple-helical region. Positions V196–P214 are enriched in pro residues. Residues P204, P207, and P210 each carry the 3-hydroxyproline modification. A compositionally biased stretch (low complexity) spans Q234–Q249. Composition is skewed to basic and acidic residues over residues E250–K263 and P289–K298. Pro residues-rich tracts occupy residues P367 to P376, P413 to Q424, and P436 to P448. A compositionally biased stretch (basic and acidic residues) spans F535–D545. The segment covering G586–G595 has biased composition (gly residues). A 3-hydroxyproline mark is found at P587 and P602. Position 603 is a 4-hydroxyproline (P603). Position 605 is a 3-hydroxyproline (P605). P606 is modified (4-hydroxyproline). The segment covering A611 to A620 has biased composition (low complexity). Residues G621–G630 show a composition bias toward gly residues. Residues P623, P626, P629, and P632 each carry the 4-hydroxyproline modification. 3-hydroxyproline is present on P647. Positions G797–G817 are enriched in gly residues. Low complexity-rich tracts occupy residues Q856–P875 and P977–P986. Residues G1011–G1020 are compositionally biased toward gly residues. The segment covering S1086–P1114 has biased composition (low complexity). At P1214 the chain carries 3-hydroxyproline. Over residues P1247 to L1258 the composition is skewed to pro residues. Gly residues predominate over residues G1290 to G1299. Residues P1368–Q1382 show a composition bias toward low complexity. P1424 bears the 3-hydroxyproline mark. One can recognise a Collagen IV NC1 domain in the interval G1445–T1669. Cystine bridges form between C1460/C1551, C1493/C1548, C1505/C1511, C1570/C1665, C1604/C1662, and C1616/C1622. An S-Lysyl-methionine sulfilimine (Met-Lys) (interchain with K-1651) cross-link involves residue M1533. An S-Lysyl-methionine sulfilimine (Lys-Met) (interchain with M-1533) cross-link involves residue K1651.

Belongs to the type IV collagen family. In terms of assembly, there are six type IV collagen isoforms, alpha 1(IV)-alpha 6(IV), each of which can form a triple helix structure with 2 other chains to generate type IV collagen network. Interacts with EFEMP2. Post-translationally, lysines at the third position of the tripeptide repeating unit (G-X-Y) are hydroxylated. The modified lysines can be O-glycosylated. In terms of processing, contains 4-hydroxyproline. Prolines at the third position of the tripeptide repeating unit (G-X-Y) are hydroxylated in some or all of the chains. Contains 3-hydroxyproline. This modification occurs on the first proline residue in the sequence motif Gly-Pro-Hyp, where Hyp is 4-hydroxyproline. Post-translationally, type IV collagens contain numerous cysteine residues which are involved in inter- and intramolecular disulfide bonding. 12 of these, located in the NC1 domain, are conserved in all known type IV collagens. In terms of processing, the trimeric structure of the NC1 domains is stabilized by covalent bonds (sulfilimine cross-links) between Lys and Met residues. These cross-links are important for the mechanical stability of the basement membrane. Sulfilimine cross-link is catalyzed by PXDN. Proteolytic processing produces the C-terminal NC1 peptide, arresten. Highly expressed in placenta.

It localises to the secreted. The protein resides in the extracellular space. It is found in the extracellular matrix. Its subcellular location is the basement membrane. Type IV collagen is the major structural component of glomerular basement membranes (GBM), forming a 'chicken-wire' meshwork together with laminins, proteoglycans and entactin/nidogen. Its function is as follows. Arresten, comprising the C-terminal NC1 domain, inhibits angiogenesis and tumor formation. The C-terminal half is found to possess the anti-angiogenic activity. Specifically inhibits endothelial cell proliferation, migration and tube formation. The protein is Collagen alpha-1(IV) chain of Homo sapiens (Human).